A 395-amino-acid chain; its full sequence is S-adenosylmethionine synthase (395 aa).

H12 lines the ATP pocket. D14 lines the Mg(2+) pocket. E40 is a binding site for K(+). Residues E53 and Q96 each coordinate L-methionine. Residues 96–106 (QSKEIADAVNF) are flexible loop. Residues 174–176 (DGK), 242–243 (RF), D251, 257–258 (RK), A274, and K278 each bind ATP. Position 251 (D251) interacts with L-methionine. Residue K282 participates in L-methionine binding.

Belongs to the AdoMet synthase family. In terms of assembly, homotetramer; dimer of dimers. It depends on Mg(2+) as a cofactor. K(+) is required as a cofactor.

The protein resides in the cytoplasm. The catalysed reaction is L-methionine + ATP + H2O = S-adenosyl-L-methionine + phosphate + diphosphate. Its pathway is amino-acid biosynthesis; S-adenosyl-L-methionine biosynthesis; S-adenosyl-L-methionine from L-methionine: step 1/1. In terms of biological role, catalyzes the formation of S-adenosylmethionine (AdoMet) from methionine and ATP. The overall synthetic reaction is composed of two sequential steps, AdoMet formation and the subsequent tripolyphosphate hydrolysis which occurs prior to release of AdoMet from the enzyme. The chain is S-adenosylmethionine synthase from Tropheryma whipplei (strain Twist) (Whipple's bacillus).